The primary structure comprises 548 residues: Rhodopsin kinase GRK7 (548 aa).

Serine 34 is modified (phosphoserine; by PKA). Positions phenylalanine 54 to leucine 171 constitute an RGS domain. In terms of domain architecture, Protein kinase spans phenylalanine 186–phenylalanine 449. Residues leucine 192–valine 200 and lysine 215 each bind ATP. The active-site Proton acceptor is aspartate 311. The AGC-kinase C-terminal domain maps to glutamine 450 to glutamate 515. The tract at residues glutamate 523 to leucine 548 is disordered. Cysteine 545 carries the cysteine methyl ester modification. Cysteine 545 is lipidated: S-geranylgeranyl cysteine. Residues leucine 546 to leucine 548 constitute a propeptide, removed in mature form.

Belongs to the protein kinase superfamily. AGC Ser/Thr protein kinase family. GPRK subfamily. Interacts (when prenylated) with PDE6D; this promotes release from membranes. In terms of processing, autophosphorylated. Phosphorylation at Ser-34 is regulated by light and activated by cAMP. Retina. Cones and rod.

It is found in the membrane. It catalyses the reaction L-threonyl-[rhodopsin] + ATP = O-phospho-L-threonyl-[rhodopsin] + ADP + H(+). The enzyme catalyses L-seryl-[rhodopsin] + ATP = O-phospho-L-seryl-[rhodopsin] + ADP + H(+). With respect to regulation, inhibited by phosphorylation of Ser-34. Its function is as follows. Retina-specific kinase involved in the shutoff of the photoresponse and adaptation to changing light conditions via cone opsin phosphorylation, including rhodopsin (RHO). The chain is Rhodopsin kinase GRK7 (GRK7) from Ictidomys tridecemlineatus (Thirteen-lined ground squirrel).